The chain runs to 1187 residues: uncharacterized protein (1187 aa).

The span at 38-57 (KNNQDIPTSNTNISPKPISQ) shows a compositional bias: polar residues. Disordered regions lie at residues 38 to 127 (KNNQ…NSPT), 189 to 215 (ISRSSSSSSSSSSSSSGKSNENSIHLN), 248 to 287 (TQPPQPYPQQIQPPQEQLQQHQSQAPHSPLPQPQPPSQLQ), 358 to 415 (NNNS…NSNS), 443 to 490 (FPNN…INNN), 536 to 689 (QFPF…SSLN), 752 to 840 (SINN…NKSI), and 1079 to 1187 (HNNN…NLQK). 4 stretches are compositionally biased toward low complexity: residues 71–84 (KPIVPSTSSTSTLI), 104–124 (PSSSSSSSSSSLSSSSTSIPN), 190–215 (SRSSSSSSSSSSSSSGKSNENSIHLN), and 248–274 (TQPPQPYPQQIQPPQEQLQQHQSQAPH). The span at 443–455 (FPNNTDENYPSDH) shows a compositional bias: polar residues. Low complexity-rich tracts occupy residues 458-490 (NDNNNDKNNNTNNNIIINDDNNNNPNNNNINNN), 543-570 (TTESGFSSTSTTPSSTSVPSSLSNSSSA), 585-653 (INNL…SNIN), 662-689 (PNSPISNYSSMSSSSSPNSFTSSTSSLN), 752-790 (SINNNNNNDKNNDIDNSNENLTTTTTTTTTTTTTTTTNN), and 797-809 (NYKINNYNNNIDN). Residues 815–832 (NDDDNDDDDDDDVDDNDD) are compositionally biased toward acidic residues. 2 stretches are compositionally biased toward low complexity: residues 1079–1149 (HNNN…PSNN) and 1156–1174 (KNNNNNNNNNNNNNNNNTN).

This is an uncharacterized protein from Dictyostelium discoideum (Social amoeba).